The following is a 287-amino-acid chain: Maleylpyruvate hydrolase (287 aa).

A divalent metal cation-binding residues include Glu-143, Glu-145, and Asp-174.

This sequence belongs to the FAH family. Homodimer.

The catalysed reaction is 3-maleylpyruvate + H2O = maleate + pyruvate + H(+). With respect to regulation, activated by Mn(2+). Inhibited by Ni(2+), Cd(2+), Co(2+) or Cu(2+). Functionally, involved in the degradation of gentisate. Catalyzes the hydrolysis of 3-maleylpyruvate, the ring-cleavage product of gentisate. The polypeptide is Maleylpyruvate hydrolase (Aquipseudomonas alcaligenes (Pseudomonas alcaligenes)).